We begin with the raw amino-acid sequence, 874 residues long: Valine--tRNA ligase (874 aa).

Residues 1-10 (MTENSQQQPP) are compositionally biased toward polar residues. The disordered stretch occupies residues 1-23 (MTENSQQQPPASEPELPTQYAPA). Residues 57–67 (PNVTGSLHLGH) carry the 'HIGH' region motif. Residues 531-535 (KMSKS) carry the 'KMSKS' region motif. An ATP-binding site is contributed by K534. Positions 806–871 (IDIVAERKRL…ARIQAQLDRM (66 aa)) form a coiled coil.

It belongs to the class-I aminoacyl-tRNA synthetase family. ValS type 1 subfamily. In terms of assembly, monomer.

The protein resides in the cytoplasm. It carries out the reaction tRNA(Val) + L-valine + ATP = L-valyl-tRNA(Val) + AMP + diphosphate. Its function is as follows. Catalyzes the attachment of valine to tRNA(Val). As ValRS can inadvertently accommodate and process structurally similar amino acids such as threonine, to avoid such errors, it has a 'posttransfer' editing activity that hydrolyzes mischarged Thr-tRNA(Val) in a tRNA-dependent manner. This Streptomyces avermitilis (strain ATCC 31267 / DSM 46492 / JCM 5070 / NBRC 14893 / NCIMB 12804 / NRRL 8165 / MA-4680) protein is Valine--tRNA ligase.